An 81-amino-acid polypeptide reads, in one-letter code: Costars family protein ABRACL (81 aa).

This sequence belongs to the costars family.

The chain is Costars family protein ABRACL from Coturnix coturnix (Common quail).